Here is a 136-residue protein sequence, read N- to C-terminus: Ribosome-binding factor A (136 aa).

The tract at residues 116 to 136 (AGNHKASDEEESDDKGHEDEQ) is disordered.

It belongs to the RbfA family. In terms of assembly, monomer. Binds 30S ribosomal subunits, but not 50S ribosomal subunits or 70S ribosomes.

It is found in the cytoplasm. Functionally, one of several proteins that assist in the late maturation steps of the functional core of the 30S ribosomal subunit. Associates with free 30S ribosomal subunits (but not with 30S subunits that are part of 70S ribosomes or polysomes). Required for efficient processing of 16S rRNA. May interact with the 5'-terminal helix region of 16S rRNA. The polypeptide is Ribosome-binding factor A (Lachnoclostridium phytofermentans (strain ATCC 700394 / DSM 18823 / ISDg) (Clostridium phytofermentans)).